The following is a 222-amino-acid chain: Ribonuclease HII (222 aa).

An RNase H type-2 domain is found at 32–222; it reads FHIAGVDEVG…LIKRYKEDIS (191 aa). A divalent metal cation contacts are provided by aspartate 38, glutamate 39, and aspartate 130.

Belongs to the RNase HII family. Requires Mn(2+) as cofactor. Mg(2+) is required as a cofactor.

Its subcellular location is the cytoplasm. It carries out the reaction Endonucleolytic cleavage to 5'-phosphomonoester.. Functionally, endonuclease that specifically degrades the RNA of RNA-DNA hybrids. The protein is Ribonuclease HII of Bartonella bacilliformis (strain ATCC 35685 / KC583 / Herrer 020/F12,63).